We begin with the raw amino-acid sequence, 71 residues long: Small ribosomal subunit protein bS21 (71 aa).

The protein belongs to the bacterial ribosomal protein bS21 family.

This is Small ribosomal subunit protein bS21 from Vesicomyosocius okutanii subsp. Calyptogena okutanii (strain HA).